The chain runs to 315 residues: Prephenate dehydratase (315 aa).

A Prephenate dehydratase domain is found at 3-190 (RIAYLGPQGT…ARTRFVLVGR (188 aa)). The region spanning 204-281 (SVALRLPNTP…EDVRYLGSWP (78 aa)) is the ACT domain.

In terms of assembly, homodimer.

It carries out the reaction prephenate + H(+) = 3-phenylpyruvate + CO2 + H2O. Its pathway is amino-acid biosynthesis; L-phenylalanine biosynthesis; phenylpyruvate from prephenate: step 1/1. This Mycobacterium sp. (strain KMS) protein is Prephenate dehydratase (pheA).